Consider the following 525-residue polypeptide: Light-independent protochlorophyllide reductase subunit B (525 aa).

Aspartate 36 serves as a coordination point for [4Fe-4S] cluster. The active-site Proton donor is the aspartate 286. 421–422 (GL) is a substrate binding site.

It belongs to the ChlB/BchB/BchZ family. As to quaternary structure, protochlorophyllide reductase is composed of three subunits; ChlL, ChlN and ChlB. Forms a heterotetramer of two ChlB and two ChlN subunits. [4Fe-4S] cluster serves as cofactor.

It carries out the reaction chlorophyllide a + oxidized 2[4Fe-4S]-[ferredoxin] + 2 ADP + 2 phosphate = protochlorophyllide a + reduced 2[4Fe-4S]-[ferredoxin] + 2 ATP + 2 H2O. Its pathway is porphyrin-containing compound metabolism; chlorophyll biosynthesis (light-independent). In terms of biological role, component of the dark-operative protochlorophyllide reductase (DPOR) that uses Mg-ATP and reduced ferredoxin to reduce ring D of protochlorophyllide (Pchlide) to form chlorophyllide a (Chlide). This reaction is light-independent. The NB-protein (ChlN-ChlB) is the catalytic component of the complex. This Prochlorococcus marinus (strain NATL2A) protein is Light-independent protochlorophyllide reductase subunit B.